The primary structure comprises 347 residues: Probable tRNA N6-adenosine threonylcarbamoyltransferase (347 aa).

A divalent metal cation-binding residues include histidine 109, histidine 113, and tyrosine 130. Substrate is bound by residues 130-134 (YVSGG), aspartate 162, glycine 177, glutamate 181, and asparagine 277. An a divalent metal cation-binding site is contributed by aspartate 305.

Belongs to the KAE1 / TsaD family. In terms of assembly, component of the EKC/KEOPS complex; the whole complex dimerizes. Requires a divalent metal cation as cofactor.

It localises to the cytoplasm. The protein localises to the nucleus. It carries out the reaction L-threonylcarbamoyladenylate + adenosine(37) in tRNA = N(6)-L-threonylcarbamoyladenosine(37) in tRNA + AMP + H(+). Functionally, component of the EKC/KEOPS complex that is required for the formation of a threonylcarbamoyl group on adenosine at position 37 (t(6)A37) in tRNAs that read codons beginning with adenine. The complex is probably involved in the transfer of the threonylcarbamoyl moiety of threonylcarbamoyl-AMP (TC-AMP) to the N6 group of A37. Likely plays a direct catalytic role in this reaction, but requires other protein(s) of the complex to fulfill this activity. The chain is Probable tRNA N6-adenosine threonylcarbamoyltransferase from Drosophila melanogaster (Fruit fly).